The sequence spans 648 residues: MKNEPTYSLLNAINYPKDLRQLSVDQLPEVCEELRQDIIKELSCNPGHFAASLGVVELTVALHYVYNTPYDRIVWDVGHQAYGHKILTGRREAFSTNRKLGGIRPFPSPEESEYDTFTCGHASNSISAALGMAVAAERKGEKDRHVVAVIGDGSMSGGLAFEGLNNASSTANNLLIILNDNDMAIDRSVGGMKQYLFNLTTSNRYNQLRFKTSRLLFKMGLLNEERRKALIRLGNSLKSLAAQQQNIFEGMNIRYFGPIDGHDVKNIARILHDIKDMQGPKILHLHTIKGKGFGPAEKQATIWHAPGKFDPVTGKRIVANTDGMPPLFQDVFGHTLVELAEKNKRIMGVTPAMPSGCSMNMLMDRMPDRAFDVGIAEGHAVTFSGGMAKDGLLPFCNIYSSFMQRAYDNIIHDVAIQKLNVVFCLDRAGLVGEDGPTHHGVFDMAYLRPIPNLTISSPMDEHELRRLMYTAQLPDKGPFAIRYPRGRGSLVDWECPLEEIPVGKGRKLKDGNDLAVITIGPIGKLAARAIERAEADTGISVAHYDLRFLKPLDEELLHEVGKKFRHIVTIEDGIIKGGMGCAILEFMADNGYYPEIRRIGVPDQFIEHGSVQQLYHLCGMDEEGIYKVITKNKLRMDAPVESCMATHS.

Thiamine diphosphate-binding positions include His79 and 120 to 122 (GHA). Asp152 is a binding site for Mg(2+). Thiamine diphosphate is bound by residues 153–154 (GS), Asn181, Phe293, and Glu377. Asn181 lines the Mg(2+) pocket.

The protein belongs to the transketolase family. DXPS subfamily. In terms of assembly, homodimer. It depends on Mg(2+) as a cofactor. The cofactor is thiamine diphosphate.

It carries out the reaction D-glyceraldehyde 3-phosphate + pyruvate + H(+) = 1-deoxy-D-xylulose 5-phosphate + CO2. It participates in metabolic intermediate biosynthesis; 1-deoxy-D-xylulose 5-phosphate biosynthesis; 1-deoxy-D-xylulose 5-phosphate from D-glyceraldehyde 3-phosphate and pyruvate: step 1/1. In terms of biological role, catalyzes the acyloin condensation reaction between C atoms 2 and 3 of pyruvate and glyceraldehyde 3-phosphate to yield 1-deoxy-D-xylulose-5-phosphate (DXP). The polypeptide is 1-deoxy-D-xylulose-5-phosphate synthase (Bacteroides fragilis (strain ATCC 25285 / DSM 2151 / CCUG 4856 / JCM 11019 / LMG 10263 / NCTC 9343 / Onslow / VPI 2553 / EN-2)).